A 260-amino-acid chain; its full sequence is Snake venom serine protease salmobin (260 aa).

A signal peptide spans 1 to 18 (MVLIKVLANHLILQLSYA). Residues 19 to 24 (QKSSEL) constitute a propeptide that is removed on maturation. In terms of domain architecture, Peptidase S1 spans 25 to 251 (VIGGDECNIN…YTDWIQSIIA (227 aa)). Disulfide bonds link cysteine 31-cysteine 165, cysteine 52-cysteine 68, cysteine 102-cysteine 258, cysteine 144-cysteine 212, cysteine 176-cysteine 191, and cysteine 202-cysteine 227. Histidine 67 acts as the Charge relay system in catalysis. An N-linked (GlcNAc...) asparagine glycan is attached at asparagine 105. Aspartate 112 functions as the Charge relay system in the catalytic mechanism. Asparagine 123 and asparagine 156 each carry an N-linked (GlcNAc...) asparagine glycan. Serine 206 acts as the Charge relay system in catalysis.

Belongs to the peptidase S1 family. Snake venom subfamily. In terms of assembly, monomer. In terms of tissue distribution, expressed by the venom gland.

Its subcellular location is the secreted. Functionally, snake venom serine protease that may act in the hemostasis system of the prey. The polypeptide is Snake venom serine protease salmobin (Gloydius halys (Chinese water mocassin)).